The sequence spans 6269 residues: Nonribosomal peptide synthetase 1 (6269 aa).

Positions E249 to I781 are adenylation 1. In terms of domain architecture, Carrier 1 spans R803 to T879. O-(pantetheine 4'-phosphoryl)serine is present on S840. The segment at L894–L1342 is epimerase 1. Residues S1373–H1775 form a condensation 1 region. Residues H1725–R2333 form an adenylation 2 region. Positions K2364–T2386 are disordered. The span at P2367–S2376 shows a compositional bias: low complexity. The span at A2377–T2386 shows a compositional bias: polar residues. The interval W2597 to Y2670 is condensation 2. Positions R2845–R3368 are adenylation 3. A Carrier 2 domain is found at A3392 to Q3468. S3429 is subject to O-(pantetheine 4'-phosphoryl)serine. The condensation 3 stretch occupies residues C3512–L3898. The interval D3919 to I4454 is adenylation 4. The region spanning E4487–T4563 is the Carrier 3 domain. S4524 carries the O-(pantetheine 4'-phosphoryl)serine modification. The epimerase 2 stretch occupies residues L4578 to D5024. Residues S5052 to L5466 are condensation 4. Positions S5552–N5628 constitute a Carrier 4 domain. O-(pantetheine 4'-phosphoryl)serine is present on S5589. The segment at N5628–N5658 is disordered. Over residues N5642 to R5657 the composition is skewed to basic and acidic residues. Residues F5720–S6067 form a condensation 5 region. The Carrier 5 domain maps to S6139–N6220.

This sequence belongs to the NRP synthetase family. Post-translationally, the thiolation domains are 4'-phosphopantetheinylated.

In terms of biological role, nonribosomal peptide synthesis (NRPS) is a key mechanism responsible for the biosynthesis of bioactive metabolites which are potentially contributing to organismal virulence. Contributes to improved fungal tolerance against oxidative stress, during the infection process. The chain is Nonribosomal peptide synthetase 1 (NRPS1) from Aspergillus fumigatus (strain ATCC MYA-4609 / CBS 101355 / FGSC A1100 / Af293) (Neosartorya fumigata).